Reading from the N-terminus, the 371-residue chain is GDP-perosamine synthase (371 aa).

Lys186 carries the N6-(pyridoxal phosphate)lysine modification.

Belongs to the DegT/DnrJ/EryC1 family. As to quaternary structure, homodimer. Pyridoxal 5'-phosphate serves as cofactor.

It catalyses the reaction GDP-alpha-D-perosamine + 2-oxoglutarate = GDP-4-dehydro-alpha-D-rhamnose + L-glutamate. It participates in bacterial outer membrane biogenesis; LPS O-antigen biosynthesis. In terms of biological role, catalyzes the synthesis of GDP-perosamine from GDP-4-keto-6-deoxy-D-mannose and L-glutamate. Can use only L-glutamate as amino donor. In vitro, can also use GDP-4-keto-3,6-dideoxymannose to produce GDP-3-deoxyperosamine. Involved in the formation of S-LPS, which is required for attachment of the protein S-layer to the outer membrane surface. The chain is GDP-perosamine synthase from Caulobacter vibrioides (strain ATCC 19089 / CIP 103742 / CB 15) (Caulobacter crescentus).